The primary structure comprises 70 residues: Large ribosomal subunit protein bL33m (70 aa).

This sequence belongs to the bacterial ribosomal protein bL33 family. In terms of assembly, component of the mitochondrial large ribosomal subunit (mt-LSU). Mature yeast 74S mitochondrial ribosomes consist of a small (37S) and a large (54S) subunit. The 37S small subunit contains a 15S ribosomal RNA (15S mt-rRNA) and 34 different proteins. The 54S large subunit contains a 21S rRNA (21S mt-rRNA) and 46 different proteins. bL33m stabilizes the tRNA acceptor stem in the E-site.

It localises to the mitochondrion. Functionally, component of the mitochondrial ribosome (mitoribosome), a dedicated translation machinery responsible for the synthesis of mitochondrial genome-encoded proteins, including at least some of the essential transmembrane subunits of the mitochondrial respiratory chain. The mitoribosomes are attached to the mitochondrial inner membrane and translation products are cotranslationally integrated into the membrane. The chain is Large ribosomal subunit protein bL33m (MRPL39) from Saccharomyces cerevisiae (strain ATCC 204508 / S288c) (Baker's yeast).